Reading from the N-terminus, the 135-residue chain is Cytochrome c2 (135 aa).

The signal sequence occupies residues 1 to 23; it reads MKKGFLAAGVFAAVAFASGAALA. Residues C37, C40, H41, and M114 each contribute to the heme c site.

The protein belongs to the cytochrome c family. Post-translationally, binds 1 heme c group covalently per subunit.

In terms of biological role, cytochrome c2 is found mainly in purple, non-sulfur, photosynthetic bacteria where it functions as the electron donor to the oxidized bacteriochlorophyll in the photophosphorylation pathway. However, it may also have a role in the respiratory chain and is found in some non-photosynthetic bacteria. In Rhodospirillum rubrum (strain ATCC 11170 / ATH 1.1.1 / DSM 467 / LMG 4362 / NCIMB 8255 / S1), this protein is Cytochrome c2 (cycA).